Consider the following 271-residue polypeptide: Urease accessory protein UreD (271 aa).

This sequence belongs to the UreD family. As to quaternary structure, ureD, UreF and UreG form a complex that acts as a GTP-hydrolysis-dependent molecular chaperone, activating the urease apoprotein by helping to assemble the nickel containing metallocenter of UreC. The UreE protein probably delivers the nickel.

The protein resides in the cytoplasm. Functionally, required for maturation of urease via the functional incorporation of the urease nickel metallocenter. The polypeptide is Urease accessory protein UreD (Azorhizobium caulinodans (strain ATCC 43989 / DSM 5975 / JCM 20966 / LMG 6465 / NBRC 14845 / NCIMB 13405 / ORS 571)).